Reading from the N-terminus, the 1134-residue chain is Centrosomal protein of 131 kDa (1134 aa).

Disordered stretches follow at residues 111 to 131, 168 to 208, 286 to 306, 425 to 455, and 492 to 528; these read NSSE…EEGE, DLPG…PLTL, ESSK…APSS, VGKK…TINP, and DQKQ…EDSR. Over residues 180–196 the composition is skewed to basic and acidic residues; sequence MHADLDSSDCDNDKQEV. Positions 494 to 504 are enriched in basic and acidic residues; the sequence is KQYDGKHKPGL. The segment covering 513 to 522 has biased composition (polar residues); that stretch reads NDTASQLSLK. Residues 732-1131 are a coiled coil; that stretch reads LESQNQAWEH…AVIRQQRKDY (400 aa).

It belongs to the CEP131 family. As to expression, expressed in chordotonal (Ch) neuronal precursors. Expressed in ciliated cells, like sensory neurons and spermatids.

The protein resides in the cytoplasm. The protein localises to the cytoskeleton. It localises to the microtubule organizing center. It is found in the centrosome. Its subcellular location is the cilium basal body. The protein resides in the centriole. Its function is as follows. Cilium-specific protein with a role in cilium/flagellum formation. May be involved in transport of components into the growing cilium. In germ cells and sensory neurons, plays a role with Cby in the building of the transition zone necessary for the formation of the ciliary cap and for the correct elongation of the axoneme. The protein is Centrosomal protein of 131 kDa of Drosophila melanogaster (Fruit fly).